Consider the following 247-residue polypeptide: Ubiquinone biosynthesis O-methyltransferase (247 aa).

The S-adenosyl-L-methionine site is built by Arg39, Gly70, Asp91, and Met134.

Belongs to the methyltransferase superfamily. UbiG/COQ3 family.

The enzyme catalyses a 3-demethylubiquinol + S-adenosyl-L-methionine = a ubiquinol + S-adenosyl-L-homocysteine + H(+). It catalyses the reaction a 3-(all-trans-polyprenyl)benzene-1,2-diol + S-adenosyl-L-methionine = a 2-methoxy-6-(all-trans-polyprenyl)phenol + S-adenosyl-L-homocysteine + H(+). The protein operates within cofactor biosynthesis; ubiquinone biosynthesis. Functionally, O-methyltransferase that catalyzes the 2 O-methylation steps in the ubiquinone biosynthetic pathway. This Cereibacter sphaeroides (strain KD131 / KCTC 12085) (Rhodobacter sphaeroides) protein is Ubiquinone biosynthesis O-methyltransferase.